A 346-amino-acid polypeptide reads, in one-letter code: S-adenosylmethionine:tRNA ribosyltransferase-isomerase (346 aa).

The protein belongs to the QueA family. As to quaternary structure, monomer.

It is found in the cytoplasm. The catalysed reaction is 7-aminomethyl-7-carbaguanosine(34) in tRNA + S-adenosyl-L-methionine = epoxyqueuosine(34) in tRNA + adenine + L-methionine + 2 H(+). It functions in the pathway tRNA modification; tRNA-queuosine biosynthesis. Transfers and isomerizes the ribose moiety from AdoMet to the 7-aminomethyl group of 7-deazaguanine (preQ1-tRNA) to give epoxyqueuosine (oQ-tRNA). In Borreliella afzelii (strain PKo) (Borrelia afzelii), this protein is S-adenosylmethionine:tRNA ribosyltransferase-isomerase.